Reading from the N-terminus, the 935-residue chain is Intimin (935 aa).

An N-terminal signal peptide occupies residues 1–41; the sequence is MITHGFYARTRHKHKLKKTFIMLSAGLGLFFYVNQNSFANG. Residues 40–153 are peptidoglycan-binding; it reads NGENYFKLSS…KMTKMSPDAT (114 aa). The sufficient for homodimerization stretch occupies residues 40-153; it reads NGENYFKLSS…KMTKMSPDAT (114 aa). The tract at residues 40–212 is required for periplasmic localization; it reads NGENYFKLSS…LQAWLQHYGT (173 aa). One can recognise a LysM domain in the interval 63–112; the sequence is LFYTLKTGETVSSISKSQGISLSVIWSLNKHLYSSESEMLKAAPGQQIIL. The inverse autotransporter stretch occupies residues 210–411; the sequence is YGTAEVNLQS…LYSMQFRYQF (202 aa). Residues 402–411 are signature sequence for beta-barrel assembly machinery (BAM), which recognizes the unfolded beta-barrel in the periplasm; it reads LYSMQFRYQF. 2 Big-1 domains span residues 560-653 and 660-754; these read VTDF…VIFV and ITEI…VTFF. A BIG2 domain is found at 790 to 834; that stretch reads GGNGTYSWHSENTNIATVDESGKVTLKGKGTAVINVTSGDKQTVS. Residues Cys-859 and Cys-933 are joined by a disulfide bond.

It belongs to the intimin/invasin family. As to quaternary structure, homodimer. Interacts with Tir.

Its subcellular location is the cell outer membrane. An inverse autotransporter. Adhesin, which mediates attachment to the human intestine epithelial cells. Necessary for the production of attaching and effacing lesions on infected human tissue culture cells. Anchored to the outer membrane by binding to peptidoglycan (PGN) via its periplasmic domain, thus helping in receptor interactions during host invasion. PGN-binding may also aid in resisting mechanical and chemical stress during transit of the bacterium through the gastrointestinal tract of the host. This chain is Intimin (eae), found in Escherichia coli O111:H-.